The sequence spans 495 residues: UDP-glycosyltransferase 73C9 (495 aa).

Position 23–26 (23–26) interacts with UDP-alpha-D-glucose; that stretch reads GHMI. The Proton acceptor role is filled by histidine 24. Aspartate 129 serves as the catalytic Charge relay. UDP-alpha-D-glucose-binding positions include 355 to 358, 373 to 381, and 397 to 398; these read WSPQ, HCGWNSTLE, and DQ.

Belongs to the UDP-glycosyltransferase family.

In terms of biological role, possesses very weak glucosyltransferase activity toward 2,4,5-trichlorophenol (TCP), when assayed with high concentrations of TCP. The chain is UDP-glycosyltransferase 73C9 from Barbarea vulgaris (Yellow rocket).